Reading from the N-terminus, the 651-residue chain is PTS system sucrose-specific EIIBCA component (651 aa).

Residues 3–86 enclose the PTS EIIB type-1 domain; it reads HQEVADRVLN…IVKTGLKEVT (84 aa). The Phosphocysteine intermediate; for EIIB activity role is filled by Cys25. 10 helical membrane passes run 109 to 129, 158 to 178, 182 to 202, 204 to 224, 226 to 246, 264 to 284, 303 to 323, 345 to 365, 404 to 424, and 444 to 464; these read VLSDIFIPIVPALVAGGLLMA, MINAMASAPFTFLPILLGFSA, FGGNPYLGATMGMIMVLPSLV, GYSVATTMAAGKMVYWNVFGL, VAQAGYQGQVLPVLGVAFILA, FTPMFAIVITGFLTFTIVGPV, TGWIGMGIFGLLYSAIVITGL, FIFPVASMANIGQGAATLAIF, FVFAAIASGIASAFLGLFHVL, and IPAFMLSAVISFVVAFIPTFI. In terms of domain architecture, PTS EIIC type-1 spans 121 to 481; sequence LVAGGLLMAL…DDRDQVKSPA (361 aa). Positions 510 to 614 constitute a PTS EIIA type-1 domain; it reads DQVFSAEIMG…DPTVMLIVTN (105 aa). His562 acts as the Tele-phosphohistidine intermediate; for EIIA activity in catalysis.

The protein resides in the cell membrane. The enzyme catalyses N(pros)-phospho-L-histidyl-[protein](out) + sucrose = sucrose 6(G)-phosphate(in) + L-histidyl-[protein]. Functionally, the phosphoenolpyruvate-dependent sugar phosphotransferase system (sugar PTS), a major carbohydrate active transport system, catalyzes the phosphorylation of incoming sugar substrates concomitantly with their translocation across the cell membrane. This system is involved in sucrose transport. The polypeptide is PTS system sucrose-specific EIIBCA component (scrA) (Pediococcus pentosaceus).